Reading from the N-terminus, the 325-residue chain is Secreted frizzled-related protein 3 (325 aa).

Residues 1–32 (MVCGSPGGMLLLRAGLLALAALCLLRVPGARA) form the signal peptide. The FZ domain occupies 33 to 150 (AACEPVRIPL…VYDRGVCISP (118 aa)). 5 disulfides stabilise this stretch: Cys35/Cys96, Cys43/Cys89, Cys80/Cys119, Cys108/Cys147, and Cys112/Cys136. Asn49 is a glycosylation site (N-linked (GlcNAc...) asparagine). Positions 178–298 (CKCKPIRATQ…WDMKLRHLGL (121 aa)) constitute an NTR domain. Residues 297–325 (GLSKSDSSNSDSTQSQKSGRNSNPRQARN) form a disordered region. Over residues 299-314 (SKSDSSNSDSTQSQKS) the composition is skewed to low complexity. Positions 315-325 (GRNSNPRQARN) are enriched in polar residues.

It belongs to the secreted frizzled-related protein (sFRP) family. In terms of assembly, interacts with MYOC. In terms of tissue distribution, expressed primarily in the cartilaginous cores of the long bone during embryonic and fetal development and in the appendicular skeleton (6-13 weeks). At 13 weeks of gestation, transcripts were present in early chondroblasts of the tarsal bones of the foot, the carpal bones of the hands and the epiphysis of long bones. Highly expressed in placenta and heart, followed by brain, skeletal muscle, kidney and pancreas. Weakly expressed in lung and liver.

The protein localises to the secreted. In terms of biological role, soluble frizzled-related proteins (sFRPS) function as modulators of Wnt signaling through direct interaction with Wnts. They have a role in regulating cell growth and differentiation in specific cell types. SFRP3/FRZB appears to be involved in limb skeletogenesis. Antagonist of Wnt8 signaling. Regulates chondrocyte maturation and long bone development. The sequence is that of Secreted frizzled-related protein 3 (FRZB) from Homo sapiens (Human).